The sequence spans 224 residues: Heme response regulator HssR (224 aa).

One can recognise a Response regulatory domain in the interval 3-116; sequence QCLVVDDDPR…ELIFRIRAVL (114 aa). Residue Asp52 is modified to 4-aspartylphosphate. Residues 124-222 constitute a DNA-binding region (ompR/PhoB-type); sequence NSEMTIGNLT…VRGQGYKVEN (99 aa).

Post-translationally, phosphorylated by HssS.

The protein resides in the cytoplasm. In terms of biological role, member of the two-component regulatory system HssS/HssR involved in intracellular heme homeostasis and tempering of staphylococcal virulence. Phosphorylated HssR binds to a direct repeat sequence within hrtAB promoter and activates the expression of hrtAB, an efflux pump, in response to extracellular heme, hemin, hemoglobin or blood. This chain is Heme response regulator HssR (hssR), found in Staphylococcus aureus (strain Mu50 / ATCC 700699).